Reading from the N-terminus, the 492-residue chain is Virion host shutoff protein (492 aa).

Disordered regions lie at residues glutamate 110–serine 130, phenylalanine 143–serine 165, serine 288–methionine 307, and glutamate 334–leucine 369. The segment covering alanine 144–serine 165 has biased composition (low complexity).

This sequence belongs to the herpesviridae VHS protein family. In terms of assembly, interacts with human EIF4H, EIF4A1 and EIF4A2; interaction with eIF4AI and EIF4A2 presumably allows Vhs protein to associate with the eIF4F cap-binding complex.

It is found in the virion. In terms of biological role, minor structural protein that acts as an endoribonuclease during lytic infection. Degrades host mRNAs in the cytoplasm by cutting them at preferred sites, including some in regions of translation initiation. Together with inhibition of host splicing by ICP27, contributes to an overall decrease in host protein synthesis. Also, after the onset of viral transcription, accelerates the turnover of viral mRNA, thereby facilitating the sequential expression of different classes of viral genes. Binds translation initiation factors eIF4H, eIF4AI, and eIF4AII, thereby may interact directly with the translation initiation complex and thus digest specifically mRNAs. Also impedes antigen presentation by major histocompatibility complex class I and class II molecules, inhibits secretion of cytokines that would otherwise recruit lymphocytes and neutrophils cells to the site of infection and blocks the activation of dendritic cells. Impedes the alpha/beta interferon-mediated response to infection. Inhibits the integrated stress response (ISR) in the infected cell, this function requires the endonuclease activity. Stress granule formation is thus inhibited, which allows protein synthesis and viral replication. This chain is Virion host shutoff protein (UL41), found in Human herpesvirus 2 (strain G) (HHV-2).